The following is a 125-amino-acid chain: Small ribosomal subunit protein uS13 (125 aa).

The disordered stretch occupies residues 92–125 (RRSLPARGQRTRTNARTRKGKRKTVAGKKKAGKK).

Belongs to the universal ribosomal protein uS13 family. In terms of assembly, part of the 30S ribosomal subunit. Forms a loose heterodimer with protein S19. Forms two bridges to the 50S subunit in the 70S ribosome.

Its function is as follows. Located at the top of the head of the 30S subunit, it contacts several helices of the 16S rRNA. In the 70S ribosome it contacts the 23S rRNA (bridge B1a) and protein L5 of the 50S subunit (bridge B1b), connecting the 2 subunits; these bridges are implicated in subunit movement. Contacts the tRNAs in the A and P-sites. This Chlorobaculum parvum (strain DSM 263 / NCIMB 8327) (Chlorobium vibrioforme subsp. thiosulfatophilum) protein is Small ribosomal subunit protein uS13.